The following is a 171-amino-acid chain: Nicotinamide-nucleotide adenylyltransferase (171 aa).

Belongs to the archaeal NMN adenylyltransferase family.

It is found in the cytoplasm. The catalysed reaction is beta-nicotinamide D-ribonucleotide + ATP + H(+) = diphosphate + NAD(+). The protein operates within cofactor biosynthesis; NAD(+) biosynthesis; NAD(+) from nicotinamide D-ribonucleotide: step 1/1. The protein is Nicotinamide-nucleotide adenylyltransferase of Methanococcus maripaludis (strain C6 / ATCC BAA-1332).